Here is a 634-residue protein sequence, read N- to C-terminus: ATP-dependent zinc metalloprotease FtsH (634 aa).

The Cytoplasmic portion of the chain corresponds to 1–5 (MNALK). The helical transmembrane segment at 6–26 (NFFIWAIIIGAAIVAFNLFEG) threads the bilayer. Residues 27-100 (KREFTTKVSL…VANPEPPGGW (74 aa)) lie on the Periplasmic side of the membrane. A helical membrane pass occupies residues 101-121 (LVNVFLSWLPILFFIGIWIFL). The Cytoplasmic segment spans residues 122-634 (LRQMSGGGNV…KSEEVKEEVV (513 aa)). Residue 195–202 (GEPGVGKT) participates in ATP binding. His-418 contributes to the Zn(2+) binding site. Glu-419 is a catalytic residue. Residues His-422 and Asp-496 each contribute to the Zn(2+) site. The disordered stretch occupies residues 615–634 (DRKSEENKELKSEEVKEEVV).

The protein in the central section; belongs to the AAA ATPase family. This sequence in the C-terminal section; belongs to the peptidase M41 family. The isolated protease domain (residues 405-634) forms a stable hexamer. Zn(2+) serves as cofactor.

It is found in the cell inner membrane. Its function is as follows. Acts as a processive, ATP-dependent zinc metallopeptidase for both cytoplasmic and membrane proteins. Plays a role in the quality control of integral membrane proteins. In Aquifex aeolicus (strain VF5), this protein is ATP-dependent zinc metalloprotease FtsH.